Here is a 494-residue protein sequence, read N- to C-terminus: Guanosine-5'-triphosphate,3'-diphosphate pyrophosphatase (494 aa).

It belongs to the GppA/Ppx family. GppA subfamily.

It carries out the reaction guanosine 3'-diphosphate 5'-triphosphate + H2O = guanosine 3',5'-bis(diphosphate) + phosphate + H(+). Its pathway is purine metabolism; ppGpp biosynthesis; ppGpp from GTP: step 2/2. Catalyzes the conversion of pppGpp to ppGpp. Guanosine pentaphosphate (pppGpp) is a cytoplasmic signaling molecule which together with ppGpp controls the 'stringent response', an adaptive process that allows bacteria to respond to amino acid starvation, resulting in the coordinated regulation of numerous cellular activities. The sequence is that of Guanosine-5'-triphosphate,3'-diphosphate pyrophosphatase from Erwinia tasmaniensis (strain DSM 17950 / CFBP 7177 / CIP 109463 / NCPPB 4357 / Et1/99).